A 273-amino-acid chain; its full sequence is Tyrosinase (273 aa).

Residues H37, H53, H62, H189, H193, and H215 each coordinate Cu cation.

It belongs to the tyrosinase family. The cofactor is Cu(2+).

It carries out the reaction 2 L-dopa + O2 = 2 L-dopaquinone + 2 H2O. The catalysed reaction is L-tyrosine + O2 = L-dopaquinone + H2O. In terms of biological role, this is a copper-containing oxidase that functions in the formation of pigments such as melanins and other polyphenolic compounds. This is Tyrosinase (melC2) from Streptomyces lincolnensis.